Consider the following 627-residue polypeptide: MEGLAGYVYKAASEGKVLTLAALLLNRSESDIRYLLGYVSQQGGQRSTPLIIAARNGHAKVVRLLLEHYRVQTQQTGTVRFDGYVIDGATALWCAAGAGHFEVVKLLVSHGANVNHTTVTNSTPLRAACFDGRLDIVKYLVENNANISIANKYDNTCLMIAAYKGHTDVVRYLLEQRADPNAKAHCGATALHFAAEAGHIDIVKELIKWRAAIVVNGHGMTPLKVAAESCKADVVELLLSHADCDRRSRIEALELLGASFANDRENYDIIKTYHYLYLAMLERFQDGDNILEKEVLPPIHAYGNRTECRNPQELESIRQDRDALHMEGLIVRERILGADNIDVSHPIIYRGAVYADNMEFEQCIKLWLHALHLRQKGNRNTHKDLLRFAQVFSQMIHLNETVKAPDIECVLRCSVLEIEQSMNRVKNISDADVHNAMDNYECNLYTFLYLVCISTKTQCSEEDQCKINKQIYNLIHLDPRTREGFTLLHLAVNSNTPVDDFHTNDVCSFPNALVTKLLLDCGAEVNAVDNEGNSALHIIVQYNRPISDFLTLHSIIISLVEAGAHTDMTNKQNKTPLDKSTTGVSEILLKTQMKMSLKCLAARAVRANDINYQDQIPRTLEEFVGFH.

ANK repeat units lie at residues 45–74 (QRST…VQTQ), 87–116 (DGAT…NVNH), 120–149 (TNST…NISI), and 153–182 (YDNT…DPNA). H185, C186, and H218 together coordinate Zn(2+). 2 ANK repeats span residues 186–215 (CGAT…AIVV) and 218–248 (HGMT…DRRS). One copy of the TPR repeat lies at 344–377 (SHPIIYRGAVYADNMEFEQCIKLWLHALHLRQKG). ANK repeat units follow at residues 483–527 (EGFT…EVNA) and 531–568 (EGNS…HTDM).

It belongs to the fem-1 family. In terms of assembly, component of a CRL2 E3 ubiquitin-protein ligase complex, also named ECS (Elongin BC-CUL2/5-SOCS-box protein) complex, composed of CUL2, Elongin BC (ELOB and ELOC), RBX1 and substrate-specific adapter FEM1B. Homooligomer. Interacts with PPM1F and PHTF1. Interacts with the death domain of FAS/TNFRSF6 and TNFRSF1A. Interacts with CHEK1. Interacts with NKX3-1. Widely expressed. Highly expressed in testis. Weakly expressed in other tissues.

It is found in the cytoplasm. The protein localises to the nucleus. The protein operates within protein modification; protein ubiquitination. Activity of the CRL2(FEM1B) complex toward FNIP1 is inhibited by BEX family proteins (BEX1, BEX2, BEX3, BEX4 and/or BEX5) in absence of reductive stress. Mechanistically, BEX proteins act as pseudosubstrate inhibitors that associate with FEM1B via zinc in absence of reductive stress, thereby preventing association between FEM1B and FNIP1. Its function is as follows. Substrate-recognition component of a Cul2-RING (CRL2) E3 ubiquitin-protein ligase complex of the DesCEND (destruction via C-end degrons) pathway, which recognizes a C-degron located at the extreme C terminus of target proteins, leading to their ubiquitination and degradation. The C-degron recognized by the DesCEND pathway is usually a motif of less than ten residues and can be present in full-length proteins, truncated proteins or proteolytically cleaved forms. The CRL2(FEM1B) complex specifically recognizes proteins ending with -Gly-Leu-Asp-Arg, such as CDK5R1, leading to their ubiquitination and degradation. Also acts as a regulator of the reductive stress response by mediating ubiquitination of reduced FNIP1: in response to reductive stress, the CRL2(FEM1B) complex specifically recognizes a conserved Cys degron in FNIP1 when this degron is reduced, leading to FNIP1 degradation and subsequent activation of mitochondria to recalibrate reactive oxygen species (ROS). Mechanistically, recognizes and binds reduced FNIP1 through two interface zinc ions, which act as a molecular glue that recruit reduced FNIP1 to FEM1B. Promotes ubiquitination of GLI1, suppressing GLI1 transcriptional activator activity. Promotes ubiquitination and degradation of ANKRD37. Promotes ubiquitination and degradation of SLBP. Involved in apoptosis by acting as a death receptor-associated protein that mediates apoptosis. Also involved in glucose homeostasis in pancreatic islet. May also act as an adapter/mediator in replication stress-induced signaling that leads to the activation of CHEK1. In Homo sapiens (Human), this protein is Protein fem-1 homolog B.